The chain runs to 562 residues: Probable sesquiterpene synthase (562 aa).

Asp315, Asp319, and Glu467 together coordinate Mg(2+). The short motif at 315-319 (DDIYD) is the DDXXD motif element.

This sequence belongs to the terpene synthase family. Tpsa subfamily. Mg(2+) is required as a cofactor. The cofactor is Mn(2+).

In terms of biological role, sesquiterpene synthase. The chain is Probable sesquiterpene synthase (STPS) from Santalum murrayanum (Bitter quandong).